The following is a 794-amino-acid chain: K(+)-insensitive pyrophosphate-energized proton pump (794 aa).

5 consecutive transmembrane segments (helical) span residues 20 to 40, 74 to 94, 102 to 122, 163 to 183, and 194 to 214; these read ALVA…GVLV, TLGV…ADDW, IFFL…MWLA, GVVG…VVLV, and GFGL…GIFT. Substrate is bound at residue K215. The Mg(2+) site is built by D218, D222, N245, and D248. The next 6 membrane-spanning stretches (helical) occupy residues 264 to 284, 285 to 305, 321 to 341, 365 to 385, 422 to 442, and 446 to 466; these read YAVT…DFGL, AFPL…IFAV, GFFI…FVYL, ILAL…QQLT, AVYT…LGGT, and LALF…GVIV. D476 contacts Mg(2+). 3 consecutive transmembrane segments (helical) span residues 508-528, 564-584, and 641-661; these read AITK…LFGS, VGLI…INAV, and IFIG…GAIG. Positions 678, 704, and 708 each coordinate Ca(2+). K711 lines the substrate pocket. 2 helical membrane-spanning segments follow: residues 717–737 and 747–767; these read AINP…PAVI and VVVR…AVYV.

The protein belongs to the H(+)-translocating pyrophosphatase (TC 3.A.10) family. K(+)-insensitive subfamily. As to quaternary structure, homodimer. Mg(2+) serves as cofactor.

It is found in the cell membrane. The catalysed reaction is diphosphate + H2O + H(+)(in) = 2 phosphate + 2 H(+)(out). Proton pump that utilizes the energy of pyrophosphate hydrolysis as the driving force for proton movement across the membrane. Generates a proton motive force. This is K(+)-insensitive pyrophosphate-energized proton pump from Streptomyces coelicolor (strain ATCC BAA-471 / A3(2) / M145).